A 326-amino-acid chain; its full sequence is Archaeal actin homolog (326 aa).

ATP-binding positions include 10 to 14, S179, Q231, 285 to 288, and Q311; these read YGDTK and GGSN.

This sequence belongs to the thermophilic archaeal actin family.

Polymerizes into bundles of filaments, forming a helix with a filament width of 5.5 nm and an axial repeating unit of 5.5 nm. Polymerization of Ta0583 requires NTP and is optimal with ATP, but GTP, UTP, CTP, and even the deoxy form of NTP can also support the polymerization reaction. Nucleoside diphosphate or AMP-PNP does not support polymerization. This chain is Archaeal actin homolog, found in Thermoplasma acidophilum (strain ATCC 25905 / DSM 1728 / JCM 9062 / NBRC 15155 / AMRC-C165).